A 584-amino-acid chain; its full sequence is Arginine--tRNA ligase (584 aa).

Positions 126–136 (PNIAKEMHVGH) match the 'HIGH' region motif.

Belongs to the class-I aminoacyl-tRNA synthetase family. In terms of assembly, monomer.

The protein localises to the cytoplasm. The catalysed reaction is tRNA(Arg) + L-arginine + ATP = L-arginyl-tRNA(Arg) + AMP + diphosphate. The chain is Arginine--tRNA ligase (argS) from Synechocystis sp. (strain ATCC 27184 / PCC 6803 / Kazusa).